We begin with the raw amino-acid sequence, 885 residues long: Alanine--tRNA ligase (885 aa).

The segment covering 426-444 has biased composition (basic and acidic residues); that stretch reads QEQKTRARQDRREKQRGGA. A disordered region spans residues 426-445; it reads QEQKTRARQDRREKQRGGAE. Positions 568, 572, 671, and 675 each coordinate Zn(2+).

It belongs to the class-II aminoacyl-tRNA synthetase family. Zn(2+) is required as a cofactor.

Its subcellular location is the cytoplasm. It catalyses the reaction tRNA(Ala) + L-alanine + ATP = L-alanyl-tRNA(Ala) + AMP + diphosphate. Catalyzes the attachment of alanine to tRNA(Ala) in a two-step reaction: alanine is first activated by ATP to form Ala-AMP and then transferred to the acceptor end of tRNA(Ala). Also edits incorrectly charged Ser-tRNA(Ala) and Gly-tRNA(Ala) via its editing domain. The sequence is that of Alanine--tRNA ligase from Chlorobium phaeovibrioides (strain DSM 265 / 1930) (Prosthecochloris vibrioformis (strain DSM 265)).